Consider the following 1035-residue polypeptide: Condensin complex subunit 3 (1035 aa).

HEAT repeat units follow at residues 113 to 150 (RFVD…NIGE) and 153 to 191 (ESLF…EEQT). Phosphoserine is present on serine 198. Residues 201–239 (EENFEATRTLVASIQNDPSAEVRRAAMLNLINDNNTRPY) form an HEAT 3 repeat. The segment at 500-536 (EEKIKSKKINRRNETSVDEEDENGTHNDEVNEDEEDD) is disordered. 2 HEAT repeats span residues 597 to 635 (ILIA…LDVK) and 827 to 864 (VQLT…SSEQ). A compositionally biased stretch (basic and acidic residues) spans 909-919 (ERSETQTKDEN). Disordered regions lie at residues 909 to 934 (ERSE…GNSF) and 959 to 995 (TTVN…LENM). Composition is skewed to polar residues over residues 920–934 (NTAN…GNSF) and 959–973 (TTVN…TEQS). Serine 933 carries the phosphoserine modification. At serine 981 the chain carries Phosphoserine. The span at 986–995 (IDTSKNLENM) shows a compositional bias: polar residues. Serine 1008 carries the phosphoserine modification. The disordered stretch occupies residues 1012 to 1035 (PDEKSDAMSIDEEDKDSESFSEVC).

The protein belongs to the CND3 (condensin subunit 3) family. In terms of assembly, component of the condensin complex, which contains the SMC2 and SMC4 heterodimer, and three non SMC subunits that probably regulate the complex: BRN1, YCS4 and YCG1/YCS5.

Its subcellular location is the nucleus. The protein localises to the cytoplasm. It is found in the chromosome. Regulatory subunit of the condensin complex, a complex required for conversion of interphase chromatin into mitotic-like condense chromosomes. The condensin complex probably introduces positive supercoils into relaxed DNA in the presence of type I topoisomerases and converts nicked DNA into positive knotted forms in the presence of type II topoisomerases. The condensin complex probably also plays a role during interphase. The protein is Condensin complex subunit 3 (YCG1) of Saccharomyces cerevisiae (strain ATCC 204508 / S288c) (Baker's yeast).